Consider the following 428-residue polypeptide: Histidinol dehydrogenase (428 aa).

Tyrosine 127, glutamine 189, and asparagine 212 together coordinate NAD(+). 3 residues coordinate substrate: serine 235, glutamine 257, and histidine 260. Residues glutamine 257 and histidine 260 each coordinate Zn(2+). Residues glutamate 325 and histidine 326 each act as proton acceptor in the active site. Histidine 326, aspartate 359, glutamate 413, and histidine 418 together coordinate substrate. Aspartate 359 serves as a coordination point for Zn(2+). Histidine 418 provides a ligand contact to Zn(2+).

The protein belongs to the histidinol dehydrogenase family. Requires Zn(2+) as cofactor.

The catalysed reaction is L-histidinol + 2 NAD(+) + H2O = L-histidine + 2 NADH + 3 H(+). It participates in amino-acid biosynthesis; L-histidine biosynthesis; L-histidine from 5-phospho-alpha-D-ribose 1-diphosphate: step 9/9. Catalyzes the sequential NAD-dependent oxidations of L-histidinol to L-histidinaldehyde and then to L-histidine. The sequence is that of Histidinol dehydrogenase from Prochlorococcus marinus subsp. pastoris (strain CCMP1986 / NIES-2087 / MED4).